A 257-amino-acid chain; its full sequence is Putative phosphatase YkrA (257 aa).

Aspartate 9 functions as the Nucleophile in the catalytic mechanism. Aspartate 9 contacts Mg(2+). Isoleucine 10 lines the phosphate pocket. Position 11 (aspartate 11) interacts with Mg(2+). Residues 43–44 (SG) and lysine 183 contribute to the phosphate site. Aspartate 206 contacts Mg(2+). Residue asparagine 209 participates in phosphate binding.

This sequence belongs to the HAD-like hydrolase superfamily. Cof family. Mg(2+) is required as a cofactor.

This chain is Putative phosphatase YkrA (ykrA), found in Bacillus subtilis (strain 168).